The primary structure comprises 299 residues: Cell division control protein 16 (299 aa).

One can recognise a Rab-GAP TBC domain in the interval 41–223; it reads GGNSSTRPYV…TIWDFLFAYG (183 aa).

The protein belongs to the BUB2 family.

The protein localises to the cytoplasm. It localises to the cytoskeleton. The protein resides in the microtubule organizing center. Its subcellular location is the spindle pole body. Its function is as follows. Has a dual role in the cell cycle. In mitosis, it is involved in maintenance of cdc2 kinase activity. It is subsequently required for regulation of septum formation. Could be involved in maintenance of cdc2 kinase activity by preventing, directly or indirectly, the degradation of cyclin or the dephosphorylation of 'Thr-167' of cdc2. In Schizosaccharomyces pombe (strain 972 / ATCC 24843) (Fission yeast), this protein is Cell division control protein 16 (cdc16).